The following is a 61-amino-acid chain: Small ribosomal subunit protein uS14 (61 aa).

Residues Cys-24, Cys-27, Cys-40, and Cys-43 each contribute to the Zn(2+) site.

Belongs to the universal ribosomal protein uS14 family. Zinc-binding uS14 subfamily. As to quaternary structure, part of the 30S ribosomal subunit. Contacts proteins S3 and S10. Zn(2+) is required as a cofactor.

Functionally, binds 16S rRNA, required for the assembly of 30S particles and may also be responsible for determining the conformation of the 16S rRNA at the A site. The polypeptide is Small ribosomal subunit protein uS14 (Limosilactobacillus fermentum (strain NBRC 3956 / LMG 18251) (Lactobacillus fermentum)).